We begin with the raw amino-acid sequence, 439 residues long: Methylenetetrahydrofolate--tRNA-(uracil-5-)-methyltransferase TrmFO (439 aa).

9–14 (GAGLAG) lines the FAD pocket.

The protein belongs to the MnmG family. TrmFO subfamily. FAD serves as cofactor.

It is found in the cytoplasm. The catalysed reaction is uridine(54) in tRNA + (6R)-5,10-methylene-5,6,7,8-tetrahydrofolate + NADH + H(+) = 5-methyluridine(54) in tRNA + (6S)-5,6,7,8-tetrahydrofolate + NAD(+). It carries out the reaction uridine(54) in tRNA + (6R)-5,10-methylene-5,6,7,8-tetrahydrofolate + NADPH + H(+) = 5-methyluridine(54) in tRNA + (6S)-5,6,7,8-tetrahydrofolate + NADP(+). Its function is as follows. Catalyzes the folate-dependent formation of 5-methyl-uridine at position 54 (M-5-U54) in all tRNAs. This chain is Methylenetetrahydrofolate--tRNA-(uracil-5-)-methyltransferase TrmFO, found in Desulforudis audaxviator (strain MP104C).